A 461-amino-acid polypeptide reads, in one-letter code: Ribulose bisphosphate carboxylase (461 aa).

Substrate is bound at residue asparagine 112. Residue lysine 167 is the Proton acceptor of the active site. Lysine 169 contributes to the substrate binding site. Positions 192, 194, and 195 each coordinate Mg(2+). Lysine 192 bears the N6-carboxylysine mark. Histidine 288 functions as the Proton acceptor in the catalytic mechanism. 3 residues coordinate substrate: arginine 289, histidine 322, and serine 369.

Belongs to the RuBisCO large chain family. Type II subfamily. Homodimer. It depends on Mg(2+) as a cofactor.

It catalyses the reaction 2 (2R)-3-phosphoglycerate + 2 H(+) = D-ribulose 1,5-bisphosphate + CO2 + H2O. The catalysed reaction is D-ribulose 1,5-bisphosphate + O2 = 2-phosphoglycolate + (2R)-3-phosphoglycerate + 2 H(+). Its function is as follows. RuBisCO catalyzes two reactions: the carboxylation of D-ribulose 1,5-bisphosphate, the primary event in carbon dioxide fixation, as well as the oxidative fragmentation of the pentose substrate. Both reactions occur simultaneously and in competition at the same active site. The protein is Ribulose bisphosphate carboxylase of Rhodopseudomonas palustris (strain BisB5).